The sequence spans 314 residues: Malate dehydrogenase (314 aa).

Residues 12–17 (GAGNIG) and aspartate 36 contribute to the NAD(+) site. Substrate contacts are provided by arginine 85 and arginine 91. Residues asparagine 98 and 121 to 123 (VTN) contribute to the NAD(+) site. Asparagine 123 and arginine 154 together coordinate substrate. The Proton acceptor role is filled by histidine 178.

This sequence belongs to the LDH/MDH superfamily. MDH type 3 family.

It catalyses the reaction (S)-malate + NAD(+) = oxaloacetate + NADH + H(+). Catalyzes the reversible oxidation of malate to oxaloacetate. This chain is Malate dehydrogenase, found in Wolbachia pipientis subsp. Culex pipiens (strain wPip).